Here is a 158-residue protein sequence, read N- to C-terminus: NADH-quinone oxidoreductase subunit B (158 aa).

Positions 37, 38, 102, and 132 each coordinate [4Fe-4S] cluster.

Belongs to the complex I 20 kDa subunit family. In terms of assembly, NDH-1 is composed of 14 different subunits. Subunits NuoB, C, D, E, F, and G constitute the peripheral sector of the complex. [4Fe-4S] cluster serves as cofactor.

The protein resides in the cell inner membrane. The catalysed reaction is a quinone + NADH + 5 H(+)(in) = a quinol + NAD(+) + 4 H(+)(out). Its function is as follows. NDH-1 shuttles electrons from NADH, via FMN and iron-sulfur (Fe-S) centers, to quinones in the respiratory chain. Couples the redox reaction to proton translocation (for every two electrons transferred, four hydrogen ions are translocated across the cytoplasmic membrane), and thus conserves the redox energy in a proton gradient. The chain is NADH-quinone oxidoreductase subunit B from Methylobacillus flagellatus (strain ATCC 51484 / DSM 6875 / VKM B-1610 / KT).